The chain runs to 127 residues: UPF0251 protein Ccel_0627 (127 aa).

This sequence belongs to the UPF0251 family.

This chain is UPF0251 protein Ccel_0627, found in Ruminiclostridium cellulolyticum (strain ATCC 35319 / DSM 5812 / JCM 6584 / H10) (Clostridium cellulolyticum).